A 252-amino-acid polypeptide reads, in one-letter code: Cell division protein ZapD (252 aa).

Belongs to the ZapD family. As to quaternary structure, interacts with FtsZ.

Its subcellular location is the cytoplasm. Cell division factor that enhances FtsZ-ring assembly. Directly interacts with FtsZ and promotes bundling of FtsZ protofilaments, with a reduction in FtsZ GTPase activity. In Dechloromonas aromatica (strain RCB), this protein is Cell division protein ZapD.